Here is a 266-residue protein sequence, read N- to C-terminus: Small ribosomal subunit protein uS2 (266 aa).

Belongs to the universal ribosomal protein uS2 family.

The polypeptide is Small ribosomal subunit protein uS2 (Corynebacterium diphtheriae (strain ATCC 700971 / NCTC 13129 / Biotype gravis)).